A 300-amino-acid chain; its full sequence is Delta-9 desaturase-like 4 protein (300 aa).

2 consecutive transmembrane segments (helical) span residues 39-59 (VVVI…WEAL) and 61-81 (FGLV…HRNL). The Histidine box-1 motif lies at 78 to 83 (HRNLSH). Positions 115-119 (HRFHH) match the Histidine box-2 motif. 2 helical membrane-spanning segments follow: residues 175–195 (IAVH…LPYL) and 200–220 (GVGI…CHIW). A Histidine box-3 motif is present at residues 247 to 251 (HNNHH).

Belongs to the fatty acid desaturase type 1 family. Fe cation is required as a cofactor.

The protein resides in the endoplasmic reticulum membrane. The protein operates within lipid metabolism; polyunsaturated fatty acid biosynthesis. This is Delta-9 desaturase-like 4 protein from Arabidopsis thaliana (Mouse-ear cress).